We begin with the raw amino-acid sequence, 511 residues long: V-type proton ATPase subunit B, brain isoform (511 aa).

Residue Arg-400 coordinates ATP.

It belongs to the ATPase alpha/beta chains family. In terms of assembly, V-ATPase is a heteromultimeric enzyme made up of two complexes: the ATP-hydrolytic V1 complex and the proton translocation V0 complex. The V1 complex consists of three catalytic AB heterodimers that form a heterohexamer, three peripheral stalks each consisting of EG heterodimers, one central rotor including subunits D and F, and the regulatory subunits C and H. The proton translocation complex V0 consists of the proton transport subunit a, a ring of proteolipid subunits c9c'', rotary subunit d, subunits e and f, and the accessory subunits ATP6AP1/Ac45 and ATP6AP2/PRR. In terms of tissue distribution, expressed in brain (at protein level). Expressed in all tissues tested, but highest in brain and in adrenal medulla.

It is found in the apical cell membrane. The protein localises to the melanosome. The protein resides in the cytoplasm. Its subcellular location is the cytoplasmic vesicle. It localises to the clathrin-coated vesicle membrane. It is found in the secretory vesicle. The protein localises to the synaptic vesicle membrane. Non-catalytic subunit of the V1 complex of vacuolar(H+)-ATPase (V-ATPase), a multisubunit enzyme composed of a peripheral complex (V1) that hydrolyzes ATP and a membrane integral complex (V0) that translocates protons. V-ATPase is responsible for acidifying and maintaining the pH of intracellular compartments and in some cell types, is targeted to the plasma membrane, where it is responsible for acidifying the extracellular environment. In renal intercalated cells, can partially compensate the lack of ATP6V1B1 and mediate secretion of protons (H+) into the urine under base-line conditions but not in conditions of acid load. The chain is V-type proton ATPase subunit B, brain isoform (ATP6V1B2) from Bos taurus (Bovine).